The chain runs to 186 residues: Dual-action ribosomal maturation protein DarP (186 aa).

The protein belongs to the DarP family.

Its subcellular location is the cytoplasm. In terms of biological role, member of a network of 50S ribosomal subunit biogenesis factors which assembles along the 30S-50S interface, preventing incorrect 23S rRNA structures from forming. Promotes peptidyl transferase center (PTC) maturation. The chain is Dual-action ribosomal maturation protein DarP from Proteus mirabilis (strain HI4320).